The primary structure comprises 153 residues: 3-hydroxyacyl-[acyl-carrier-protein] dehydratase FabZ (153 aa).

His47 is an active-site residue.

It belongs to the thioester dehydratase family. FabZ subfamily.

The protein localises to the cytoplasm. The enzyme catalyses a (3R)-hydroxyacyl-[ACP] = a (2E)-enoyl-[ACP] + H2O. Involved in unsaturated fatty acids biosynthesis. Catalyzes the dehydration of short chain beta-hydroxyacyl-ACPs and long chain saturated and unsaturated beta-hydroxyacyl-ACPs. The chain is 3-hydroxyacyl-[acyl-carrier-protein] dehydratase FabZ from Myxococcus xanthus (strain DK1622).